The chain runs to 297 residues: MPALDIASAPAAVYQQQLHLPRILCLHGGGTNARIFTAQCRALRRQLTDSYRLVFADAPFLSSAGPDVTSVYGEWGPFRSWVPVPAGVDISAWAAAGAASRIDIDVEAIDECIAAAIAQDDRAGATGDWVGLLGFSQGARVAASLLYRQQKQQRMGLTSWSRGRDRKRGATSSTNYRFAVLFAGRGPLLDLGFGSGSLAGSSAASSSASASVSGSESAGEEEEDGHLLSIPTIHVHGLRDPGLEMHRDLVRSCRPSSVRIVEWEGAHRMPITTKDVGAVVAELRHLAISRKYESLRC.

The Charge relay system role is filled by Ser136. Over residues 204–217 (ASSSASASVSGSES) the composition is skewed to low complexity. Residues 204–226 (ASSSASASVSGSESAGEEEEDGH) are disordered. Catalysis depends on charge relay system residues Asp240 and His267.

Belongs to the LovG family.

In terms of biological role, probable esterase; part of the gene cluster that mediates the biosynthesis of asperfuranone, a probable antitumor agent. The polyketide synthase afoG is responsible for producing the 3,5-dimethyloctadienone moiety from acetyl-CoA, three malonyl-CoA, and two S-adenosyl methionines (SAM). The 3,5-dimethyloctadienone moiety is then loaded onto the SAT domain of afoE and extended with four malonyl-CoA and one SAM, which leads to the formation of 2,4-dihydroxy-6-(5,7-dimethyl-2-oxo-trans-3-trans-5-nonadienyl)-3-methylbenzaldehyde (compound 2) after reductive release and aldol condensation. AfoD is the next enzyme in the biosynthesis sequence and hydroxylates the side chain at the benzylic position of compound 2. After benzylic hydroxylation, a furan ring is formed after five-member ring hemiacetal formation and water elimination. AfoF and afoC are proposed to oxidize the R-diketone proton and to reduce the unconjugated carbonyl group, respectively, to generate asperfuranone. Since no intermediates could be isolated from afoF and afoC deletants, the sequence of these two enzymes is not fully understood. Moreover, since afoC deletant still produces a small amount of asperfuranone, other endogenous oxidoreductases might catalyze the same reaction with much less efficiency. This Emericella nidulans (strain FGSC A4 / ATCC 38163 / CBS 112.46 / NRRL 194 / M139) (Aspergillus nidulans) protein is Probable esterase afoC.